Here is a 136-residue protein sequence, read N- to C-terminus: Histone H3.3C (136 aa).

Polar residues predominate over residues 1–10 (MARTKQTACK). The disordered stretch occupies residues 1-39 (MARTKQTACKSTGRKAPRKQLATKAAHKSAPAMGGVKKP). R3 bears the Asymmetric dimethylarginine; by PRMT6 mark. A Phosphothreonine; by HASPIN modification is found at T4. K5 carries the post-translational modification Allysine; alternate. An N6,N6,N6-trimethyllysine; alternate modification is found at K5. K5 carries the post-translational modification N6,N6-dimethyllysine; alternate. At K5 the chain carries N6-(2-hydroxyisobutyryl)lysine; alternate. K5 carries the post-translational modification N6-acetyllysine; alternate. K5 bears the N6-methyllysine; alternate mark. Q6 is modified (5-glutamyl dopamine; alternate). Q6 is modified (5-glutamyl serotonin; alternate). The residue at position 7 (T7) is a Phosphothreonine; by PKC. Position 10 is an N6-(2-hydroxyisobutyryl)lysine; alternate (K10). The residue at position 10 (K10) is an N6-lactoyllysine; alternate. K10 is modified (N6-methylated lysine). An ADP-ribosylserine; alternate modification is found at S11. S11 is modified (phosphoserine; alternate; by AURKB, AURKC, RPS6KA3, RPS6KA4 and RPS6KA5). Residue T12 is modified to Phosphothreonine; by PKC. K15 is subject to N6-(2-hydroxyisobutyryl)lysine; alternate. N6-lactoyllysine; alternate is present on K15. An N6-acetyllysine modification is found at K15. Residue K15 is modified to N6-glutaryllysine; alternate. R18 carries the asymmetric dimethylarginine modification. K19, K24, and K28 each carry N6-(2-hydroxyisobutyryl)lysine; alternate. The residue at position 19 (K19) is an N6-acetyllysine; alternate. 3 positions are modified to N6-lactoyllysine; alternate: K19, K24, and K28. N6-glutaryllysine; alternate occurs at positions 19, 24, and 28. 2 positions are modified to N6-butyryllysine; alternate: K19 and K24. K19 is modified (N6-methylated lysine; alternate). K24 is subject to N6-acetyllysine. Position 28 is an N6-acetyllysine; alternate (K28). K28 is modified (N6-methylated lysine; alternate). An ADP-ribosylserine; alternate modification is found at S29. A Phosphoserine; alternate; by AURKB, AURKC and RPS6KA5 modification is found at S29. Residue K37 is modified to N6-(2-hydroxyisobutyryl)lysine; alternate. K37 is subject to N6-acetyllysine; alternate. N6-methylated lysine; alternate is present on K37. Y42 is subject to Phosphotyrosine. Residue K57 is modified to N6-(2-hydroxyisobutyryl)lysine; alternate. Residue K57 is modified to N6-lactoyllysine; alternate. At K57 the chain carries N6-glutaryllysine; alternate. K57 carries the post-translational modification N6-succinyllysine; alternate. The residue at position 58 (S58) is a Phosphoserine. 2 positions are modified to N6-(2-hydroxyisobutyryl)lysine; alternate: K65 and K80. Residues K65 and K80 each carry the N6-methylated lysine modification. An N6-lactoyllysine; alternate modification is found at K80. K80 carries the N6-glutaryllysine; alternate modification. K80 carries the post-translational modification N6-succinyllysine; alternate. T81 carries the phosphothreonine modification. Residues K116 and K123 each carry the N6-acetyllysine; alternate modification. N6-glutaryllysine; alternate is present on residues K116 and K123. K123 is subject to N6-(2-hydroxyisobutyryl)lysine; alternate. K123 carries the N6-methylated lysine; alternate modification. Position 123 is an N6-succinyllysine; alternate (K123).

This sequence belongs to the histone H3 family. In terms of assembly, the nucleosome is a histone octamer containing two molecules each of H2A, H2B, H3 and H4 assembled in one H3-H4 heterotetramer and two H2A-H2B heterodimers. The octamer wraps approximately 147 bp of DNA. Post-translationally, acetylation is generally linked to gene activation. Acetylation on Lys-19 (H3K18ac) and Lys-24 (H3K24ac) favors methylation at Arg-18 (H3R17me). Acetylation at Lys-123 (H3K122ac) by EP300/p300 plays a central role in chromatin structure: localizes at the surface of the histone octamer and stimulates transcription, possibly by promoting nucleosome instability. In terms of processing, asymmetric dimethylation at Arg-18 (H3R17me2a) is linked to gene activation. Asymmetric dimethylation at Arg-3 (H3R2me2a) by PRMT6 is linked to gene repression and is mutually exclusive with H3 Lys-5 methylation (H3K4me2 and H3K4me3). H3R2me2a is present at the 3' of genes regardless of their transcription state and is enriched on inactive promoters, while it is absent on active promoters. Methylation at Lys-5 (H3K4me) and Lys-80 (H3K79me) are linked to gene activation. Methylation at Lys-5 (H3K4me) facilitates subsequent acetylation of H3 and H4. Methylation at Lys-80 (H3K79me) is associated with DNA double-strand break (DSB) responses and is a specific target for TP53BP1. Methylation at Lys-10 (H3K9me) and Lys-28 (H3K27me) are linked to gene repression. Methylation at Lys-10 (H3K9me) is a specific target for HP1 proteins (CBX1, CBX3 and CBX5) and prevents subsequent phosphorylation at Ser-11 (H3S10ph) and acetylation of H3 and H4. Methylation at Lys-5 (H3K4me) and Lys-80 (H3K79me) require preliminary monoubiquitination of H2B at 'Lys-120'. Post-translationally, phosphorylated at Thr-4 (H3T3ph) by HASPIN during prophase and dephosphorylated during anaphase. Phosphorylation at Ser-11 (H3S10ph) by AURKB is crucial for chromosome condensation and cell-cycle progression during mitosis and meiosis. In addition phosphorylation at Ser-11 (H3S10ph) by RPS6KA4 and RPS6KA5 is important during interphase because it enables the transcription of genes following external stimulation, like mitogens, stress, growth factors or UV irradiation and result in the activation of genes, such as c-fos and c-jun. Phosphorylation at Ser-11 (H3S10ph), which is linked to gene activation, prevents methylation at Lys-10 (H3K9me) but facilitates acetylation of H3 and H4. Phosphorylation at Ser-11 (H3S10ph) by AURKB mediates the dissociation of HP1 proteins (CBX1, CBX3 and CBX5) from heterochromatin. Phosphorylation at Ser-11 (H3S10ph) is also an essential regulatory mechanism for neoplastic cell transformation. Phosphorylated at Ser-29 (H3S28ph) by MAP3K20 isoform 1, RPS6KA5 or AURKB during mitosis or upon ultraviolet B irradiation. Phosphorylation at Thr-7 (H3T6ph) by PRKCB is a specific tag for epigenetic transcriptional activation that prevents demethylation of Lys-5 (H3K4me) by LSD1/KDM1A. At centromeres, specifically phosphorylated at Thr-12 (H3T11ph) from prophase to early anaphase, by DAPK3 and PKN1. Phosphorylation at Thr-12 (H3T11ph) by PKN1 or isoform M2 of PKM (PKM2) is a specific tag for epigenetic transcriptional activation that promotes demethylation of Lys-10 (H3K9me) by KDM4C/JMJD2C. Phosphorylation at Tyr-42 (H3Y41ph) by JAK2 promotes exclusion of CBX5 (HP1 alpha) from chromatin. In terms of processing, lysine deamination at Lys-5 (H3K4all) to form allysine only takes place on H3K4me3 and results in gene repression. Butyrylation of histones marks active promoters and competes with histone acetylation. It is present during late spermatogenesis. Post-translationally, succinylation at Lys-80 (H3K79succ) by KAT2A takes place with a maximum frequency around the transcription start sites of genes. It gives a specific tag for epigenetic transcription activation. Desuccinylation at Lys-123 (H3K122succ) by SIRT7 in response to DNA damage promotes chromatin condensation and double-strand breaks (DSBs) repair. In terms of processing, serine ADP-ribosylation constitutes the primary form of ADP-ribosylation of proteins in response to DNA damage. Serine ADP-ribosylation at Ser-11 (H3S10ADPr) is mutually exclusive with phosphorylation at Ser-11 (H3S10ph) and impairs acetylation at Lys-10 (H3K9ac).

The protein resides in the nucleus. Its subcellular location is the chromosome. In terms of biological role, core component of nucleosome. Nucleosomes wrap and compact DNA into chromatin, limiting DNA accessibility to the cellular machineries which require DNA as a template. Histones thereby play a central role in transcription regulation, DNA repair, DNA replication and chromosomal stability. DNA accessibility is regulated via a complex set of post-translational modifications of histones, also called histone code, and nucleosome remodeling. The sequence is that of Histone H3.3C from Cairina moschata (Muscovy duck).